The following is a 37-amino-acid chain: Large ribosomal subunit protein bL36 (37 aa).

Belongs to the bacterial ribosomal protein bL36 family.

This is Large ribosomal subunit protein bL36 from Methylibium petroleiphilum (strain ATCC BAA-1232 / LMG 22953 / PM1).